A 404-amino-acid polypeptide reads, in one-letter code: Sialidase (404 aa).

A signal peptide spans 1-27; that stretch reads MKKFIKILKVLSMAIVLSACNINGIFA. Arginine 55 contacts substrate. Aspartate 80 serves as the catalytic Proton acceptor. 3 BNR repeats span residues 89–100, 158–169, and 226–237; these read AKSTDNGQTWDY, VYSDDNGETWSD, and IYSKDNGETWTM. Substrate is bound at residue arginine 263. The stretch at 273 to 284 is one BNR 4 repeat; the sequence is YISYDMGSTWEV. Tyrosine 365 serves as the catalytic Nucleophile.

The protein belongs to the glycosyl hydrolase 33 family. It is possible that the sialidase is cleaved in front of a cysteine within the leader peptide, forming a glyceride thioether bond which links the protein to the membrane. A second proteolytic cleavage releases the mature extracellular protein.

Its subcellular location is the secreted. It catalyses the reaction Hydrolysis of alpha-(2-&gt;3)-, alpha-(2-&gt;6)-, alpha-(2-&gt;8)- glycosidic linkages of terminal sialic acid residues in oligosaccharides, glycoproteins, glycolipids, colominic acid and synthetic substrates.. Its function is as follows. Sialidases have been suggested to be pathogenic factors in microbial infections. In Paraclostridium sordellii (Clostridium sordellii), this protein is Sialidase.